The following is a 260-amino-acid chain: Exosome complex component Rrp4 (260 aa).

In terms of domain architecture, S1 motif spans 59–128; sequence NDVVIGIVIV…NSMKVELALR (70 aa). In terms of domain architecture, KH spans 136–194; the sequence is KTGQIVEVEPVKVPRVIGHGGSMISMLKKETNCSIFVGQNGRIWIDGKDDDVELLSKAL.

Belongs to the RRP4 family. As to quaternary structure, component of the archaeal exosome complex. Forms a trimer of Rrp4 and/or Csl4 subunits. The trimer associates with a hexameric ring-like arrangement composed of 3 Rrp41-Rrp42 heterodimers.

The protein localises to the cytoplasm. Non-catalytic component of the exosome, which is a complex involved in RNA degradation. Increases the RNA binding and the efficiency of RNA degradation. Confers strong poly(A) specificity to the exosome. In Methanosarcina barkeri (strain Fusaro / DSM 804), this protein is Exosome complex component Rrp4.